Consider the following 1179-residue polypeptide: MSETQSDPIDVSKFKNGDDVHFDYNSTTNDQTINSTNVQKKKKKKKSKNKHKGSPNVEATLNDPDVEYPTSRVIKQAPNGDVIIESLDEPSDAHTKSVTANIWDNATLEEQENLKAFWESLDEAQKIELVKIDKKSIMDIFKNESKTVNTSNNHQNNSNTQGGSTSTSGGALNGSSTNVNIPGAPSNSSNGACTCSYCGRKNNFIEDELENIYDNHFDDIIDFIHEVRDINDLNALPGLLFGGFHMLEEEHKLQKRQQKYKYKQERDAHHDHHNHEPGHICSDTGSSGDYDGSTQQDQQHQYEHEIEHAFQEDEHEDECGHKNDHSHSHSHSHTENHNHSHSYDPNHNHSHSHFQYDQIEELNNEDELSQEAVLQKSLDDELNKELGDESNNNQSSIATKEQRVFHKLLDPKLFEALENLDFEKMKDTPANNHSAHILEKAGSLRDIIRDLHKADKVELEKGMAFLQNMGKIFSSDMSNAMNHDTLNDQISNGLSSFAEDLLKNDGNSFIDMMESLSESRTAREDLLKEKFDKEPSAAWIDEDDHTKSDTDISIPKPDLHQVQELEEELNDEYDEVDEDDDEGEEEGEEEEEELDDEEFEEDEEEDASDTESEISEEEKMQEIRRLFLIQVIKLFQERLKNAYKEKLSQDRTRTLIEELEAEENAKKEREMKKLRQKEKAKEKKRLQQLAKEEERRKKEEEQKAKEEELKQKQEALRAEQRRKKEEAKQKREEEKRKRIEELKRKELEHQKRLEAQRKKEEETKKLKDEKKKKIEEERKQKEEEKRQKELQKKLVEEERSKSAKKQDHKETGSSEDISQLSRDLENARLGQNFNIPSPVVPDTLLAQPQEPRVKSPTKNHILDQLYLAKPRSLSNSTNSTPQINNVTPGYIPDLSSNSMLPSVLSPSGHNILPNNGNVNNQAVPSPWSSQAFNANTQAPPVYQPQLSSNAFSPFNSSLSQNSLSSNANENLNTNPLNTTGFNEPFATAAQPSSVWNPGATSRNNSIWSNSPNVASNSTLWGNSVPAPPVGAAVGGNPNSLDSDLIQAAAYQAFQFLQNSNQLEFGVAPSLKLFQTAKTILSNQGLTLNQFLTSCRNTGSLSGYGFDFIYDDFGTVTHIKASSTNIPQQPPHNNVNTQSINSLGLGNAAVNDNESSLLNTLSDINNNPNSFSNGVRGLWN.

7 disordered regions span residues 1 to 64 (MSET…LNDP), 147 to 189 (TVNT…SNSS), 255 to 351 (KRQQ…NHSH), 537 to 619 (AAWI…EEEK), 660 to 819 (EAEE…DISQ), 928 to 947 (SSQA…PQLS), and 957 to 997 (SLSQ…VWNP). Positions 10-22 (DVSKFKNGDDVHF) are enriched in basic and acidic residues. The segment covering 24–38 (YNSTTNDQTINSTNV) has biased composition (polar residues). Basic residues predominate over residues 39 to 53 (QKKKKKKKSKNKHKG). Low complexity predominate over residues 149–178 (NTSNNHQNNSNTQGGSTSTSGGALNGSSTN). Over residues 262-278 (YKQERDAHHDHHNHEPG) the composition is skewed to basic and acidic residues. Positions 282 to 299 (SDTGSSGDYDGSTQQDQQ) are enriched in low complexity. Residues 300 to 347 (HQYEHEIEHAFQEDEHEDECGHKNDHSHSHSHSHTENHNHSHSYDPNH) are compositionally biased toward basic and acidic residues. Positions 564–616 (ELEEELNDEYDEVDEDDDEGEEEGEEEEEELDDEEFEEDEEEDASDTESEISE) are enriched in acidic residues. A coiled-coil region spans residues 648–810 (SQDRTRTLIE…KSAKKQDHKE (163 aa)). 2 stretches are compositionally biased toward basic and acidic residues: residues 663-681 (ENAK…EKAK) and 690-812 (AKEE…KETG). Low complexity predominate over residues 957–977 (SLSQNSLSSNANENLNTNPLN).

The protein belongs to the NST1 family.

It is found in the cytoplasm. In terms of biological role, may act as a negative regulator of salt tolerance. In Debaryomyces hansenii (strain ATCC 36239 / CBS 767 / BCRC 21394 / JCM 1990 / NBRC 0083 / IGC 2968) (Yeast), this protein is Stress response protein NST1 (NST1).